A 511-amino-acid polypeptide reads, in one-letter code: Transcription factor bHLH28 (511 aa).

One can recognise a bHLH domain in the interval 339–388 (DKPLNHVEAERMRREKLNHRFYALRAVVPNVSKMDKTSLLEDAVCYINEL).

In terms of assembly, homodimer.

It is found in the nucleus. The protein is Transcription factor bHLH28 (BHLH28) of Arabidopsis thaliana (Mouse-ear cress).